The chain runs to 131 residues: Protein TIFY 5A (131 aa).

The EAR motif lies at 9–13 (LELRL). 2 disordered regions span residues 14–44 (FPTS…EESQ) and 74–131 (REMK…HSRR). A compositionally biased stretch (low complexity) spans 16-34 (TSYDSDSSDTTSVVESTSS). Residues 39 to 74 (PNEESQRITIFYNGKMCFSSDVTHLQARSIISIASR) enclose the Tify domain. Over residues 79–100 (KSSSNGSDPPNKSTSFHHNQLP) the composition is skewed to polar residues. The Jas signature appears at 105-127 (SMKKSLQSFLQKRKIRIQATSPY). The Nuclear localization signal motif lies at 106–113 (MKKSLQSF). The segment covering 122–131 (QATSPYHSRR) has biased composition (polar residues).

It belongs to the TIFY/JAZ family. As to quaternary structure, interacts with TPL and weakly with COI1, but not with AFPH2/NINJA. Interacts with MYC2, MYB21, MYB24, TIFY10A/JAZ1, TIFY10B/JAZ2, TIFY6B/JAZ3, TIFY6A/JAZ4, TIFY11A/JAZ5, TIFY11B/JAZ6, TIFY7/JAZ9, TIFY9/JAZ10 and TIFY3B/JAZ12. Interacts with RHD6 and RSL1. (Microbial infection) Interacts with the pathogenic Pseudomonas syringae HopZ1a protein. Post-translationally, (Microbial infection) Acetylated by Pseudomonas syringae HopZ1a. In terms of processing, ubiquitinated.

It is found in the nucleus. In terms of biological role, repressor of jasmonate responses. Unable to associate strongly with COI1 in the presence of jasmonoyl-isoleucine (JA-Ile) and is therefore more resistant to JA-mediated-degradation than other TIFY/JAZ proteins. Repress gene expression through direct recruitment of the corepressor TOPLESS to cognate transcription factors. Interacts with and suppresses RHD6 and RSL1 transcription factor activities to negatively regulate jasmonate-stimulated root hair development. This chain is Protein TIFY 5A, found in Arabidopsis thaliana (Mouse-ear cress).